Here is a 531-residue protein sequence, read N- to C-terminus: Doublesex- and mab-3-related transcription factor A2 (531 aa).

Positions 69 to 116 form a DNA-binding region, DM; that stretch reads CARCRNHGVVSALKGHKRYCRWKDCLCAKCTLIAERQRVMAAQVALRR. The interval 197–312 is disordered; it reads LQAGRPDSPQ…GGPGPRQRTP (116 aa). Positions 274–285 are enriched in low complexity; the sequence is PGSSSPLGSESG. The 36-residue stretch at 310 to 345 folds into the DMA domain; it reads RTPLDILTRVFPGHRRGVLELVLQGCGGDVVQAIEQ.

This sequence belongs to the DMRT family. Expressed in adult brain and testis, as well as in embryonic ovary, kidney, heart, lung, stomach and brain.

The protein resides in the nucleus. Its function is as follows. May be involved in sexual development. This chain is Doublesex- and mab-3-related transcription factor A2 (Dmrta2), found in Mus musculus (Mouse).